The following is a 362-amino-acid chain: Protein-glutamate methylesterase/protein-glutamine glutaminase 1 (362 aa).

Positions 10 to 127 (RVLVVDDSSF…ADAQRVFREE (118 aa)) constitute a Response regulatory domain. A 4-aspartylphosphate modification is found at D61. Positions 163–357 (PRPSQALAGK…LPLTQIGSEI (195 aa)) constitute a CheB-type methylesterase domain. Catalysis depends on residues S181, H208, and D306.

It belongs to the CheB family. Post-translationally, phosphorylated by CheA. Phosphorylation of the N-terminal regulatory domain activates the methylesterase activity.

The protein localises to the cytoplasm. The catalysed reaction is [protein]-L-glutamate 5-O-methyl ester + H2O = L-glutamyl-[protein] + methanol + H(+). It catalyses the reaction L-glutaminyl-[protein] + H2O = L-glutamyl-[protein] + NH4(+). Involved in chemotaxis. Part of a chemotaxis signal transduction system that modulates chemotaxis in response to various stimuli. Catalyzes the demethylation of specific methylglutamate residues introduced into the chemoreceptors (methyl-accepting chemotaxis proteins or MCP) by CheR. Also mediates the irreversible deamidation of specific glutamine residues to glutamic acid. This chain is Protein-glutamate methylesterase/protein-glutamine glutaminase 1, found in Geobacter sulfurreducens (strain ATCC 51573 / DSM 12127 / PCA).